The sequence spans 40 residues: Photosystem II reaction center protein J (40 aa).

The helical transmembrane segment at 8-28 (IPLWIIGTVAGILVIGLIGIF) threads the bilayer.

Belongs to the PsbJ family. PSII is composed of 1 copy each of membrane proteins PsbA, PsbB, PsbC, PsbD, PsbE, PsbF, PsbH, PsbI, PsbJ, PsbK, PsbL, PsbM, PsbT, PsbX, PsbY, PsbZ, Psb30/Ycf12, at least 3 peripheral proteins of the oxygen-evolving complex and a large number of cofactors. It forms dimeric complexes.

It localises to the plastid. The protein localises to the chloroplast thylakoid membrane. One of the components of the core complex of photosystem II (PSII). PSII is a light-driven water:plastoquinone oxidoreductase that uses light energy to abstract electrons from H(2)O, generating O(2) and a proton gradient subsequently used for ATP formation. It consists of a core antenna complex that captures photons, and an electron transfer chain that converts photonic excitation into a charge separation. This chain is Photosystem II reaction center protein J, found in Oenothera elata subsp. hookeri (Hooker's evening primrose).